Here is a 1000-residue protein sequence, read N- to C-terminus: MLGAWRAAPRLRLRARFGVASVWARSAASEANSRRPAEESRQDSQYRDTVLLPHSRFAAQLPGRLQPDTELETQQKSGFLELYSWQRQRKAKQEFCLHDGPPYANGDPHVGHALNKILKDITNRFHMMRGYKVHYVPGWDCHGLPIELKALSEVKGAENLSPVEIRQKAKEFAERAIEKQKAAFIRWGIMADWANCYRTFDPKYEANQLRVFHKMYDKGFIYQDYKPVFWSPSAKTALAEAELEYNEQHVSRSVYMKFPLLKSPPKLASVIDGSSPASVLVWTTQPWTVPANQAVCYMPDAEYSVVKCATTGEHLILAADRVESTAAVLDTQFEVISTCKGVDLADGSCAHPTIAGRVSPLLPANHVTMTKGTGLVHTAPAHGMEDYNVASHHQLPTECLVDESGHFTEAAGPELKNKNVLEEGNEAVIKMLQAAGSLLKEEKYVHSYPYDWRTKKPMIIRASKQWFVNTANVKATAQEALKKVKIIPTSAVNRMLEMLDRRTFWCISRQRCWGVPIPVFYQKDTGESLINSETIADVIKIVEQQGTDAWWTLPIEQLLSKEAVAKAGGHNVLDYVKGQDVLDIWFDSGTSWAHVLEGAEQRADVYLEGKDQLGGWFQSSLLTSVATRKKAPYKTLVVHGFTLGEKGEKMSKSIGNVVDPDVVINGGDDHTKDPPYGADVLRWWVAESNVFTEVLIGPVVLNAARDDINKLRNTLRFMLGNMAGFNPETDSIPPSEMYIVDQYMLHLLQDYGSKVTEAYKEYDYSKVVRLLQAFCSRNLSNFYFSIIKDRLYCEEEKDPKRRSCQTVLAEALDVVVRSFAPILPHLAEEVFQHLPYKKDSEGVFRTGWINASSGWKKPGIEEAIEGACAMRDSFLGSISGKNALEYEVIIVIEPGLLFELMEALQAEESSRVSQLNEIMMASQTTLLSEIPKETPADANIVKGNFLINLEGGDIREESSYQVIALPTTKAKCPRCRRYTSDSSSTPCPRCLKVIAGKGST.

A mitochondrion-targeting transit peptide spans 1-27; sequence MLGAWRAAPRLRLRARFGVASVWARSA. The 'HIGH' region motif lies at 102 to 112; sequence PYANGDPHVGH. Lys-649 and Lys-652 together coordinate ATP. The 'KMSKS' region motif lies at 649–653; that stretch reads KMSKS.

The protein belongs to the class-I aminoacyl-tRNA synthetase family.

The protein localises to the mitochondrion matrix. The enzyme catalyses tRNA(Ile) + L-isoleucine + ATP = L-isoleucyl-tRNA(Ile) + AMP + diphosphate. Aminoacyl-tRNA synthetase that catalyzes the specific attachment of isoleucine to its cognate tRNA (tRNA(Ile)). In Gallus gallus (Chicken), this protein is Isoleucine--tRNA ligase, mitochondrial (IARS2).